The chain runs to 180 residues: Shikimate kinase (180 aa).

An ATP-binding site is contributed by 14-19 (GAGKSS). Ser-18 contacts Mg(2+). Residues Asp-36, Arg-60, and Gly-82 each contribute to the substrate site. Arg-120 is an ATP binding site. Arg-139 contributes to the substrate binding site.

It belongs to the shikimate kinase family. In terms of assembly, monomer. Mg(2+) is required as a cofactor.

The protein localises to the cytoplasm. It catalyses the reaction shikimate + ATP = 3-phosphoshikimate + ADP + H(+). It participates in metabolic intermediate biosynthesis; chorismate biosynthesis; chorismate from D-erythrose 4-phosphate and phosphoenolpyruvate: step 5/7. In terms of biological role, catalyzes the specific phosphorylation of the 3-hydroxyl group of shikimic acid using ATP as a cosubstrate. This Xylella fastidiosa (strain 9a5c) protein is Shikimate kinase.